The sequence spans 189 residues: Peptidyl-tRNA hydrolase (189 aa).

Residue Y14 participates in tRNA binding. H19 (proton acceptor) is an active-site residue. Positions 64, 66, and 112 each coordinate tRNA.

This sequence belongs to the PTH family. As to quaternary structure, monomer.

It localises to the cytoplasm. It carries out the reaction an N-acyl-L-alpha-aminoacyl-tRNA + H2O = an N-acyl-L-amino acid + a tRNA + H(+). Its function is as follows. Hydrolyzes ribosome-free peptidyl-tRNAs (with 1 or more amino acids incorporated), which drop off the ribosome during protein synthesis, or as a result of ribosome stalling. Catalyzes the release of premature peptidyl moieties from peptidyl-tRNA molecules trapped in stalled 50S ribosomal subunits, and thus maintains levels of free tRNAs and 50S ribosomes. The chain is Peptidyl-tRNA hydrolase from Clostridium botulinum (strain 657 / Type Ba4).